The sequence spans 462 residues: MSNGFIVQIIGAVVDIEFPQDAVPQVYDALKVVSEGQGQGLVLEVQQQIGGGVVRCITMGSSDGLRRGLEVVNSGKSIQVPVGVSTLGRIMNVLGDPIDEKGPIGEEERWSIHRAAPSYEDQSNSNDLLETGIKVIDLVCPFAKGGKVGLFGGAGVGKTVNMMELIRNIAIEHSGYSVFAGVGERTREGNDFYHEMMESNVLDKVSLVYGQMNEPPGNRLRVALTGLTMAEKFRDEGRDVLFFVDNIYRYTLAGTEVSALLGRMPSAVGYQPTLAEEMGVLQERITSTKTGSITSVQAVYVPADDLTDPSPATTFAHLDATVVLSRQIAALGIYPAVDPLDSTSRQLDPLVVGKEHYETARGVQTVLQRYKELKDIIAILGMDELSEEDKLTVARARKIERFLSQPFFVAEVFTGSPGKYVPLKETIRGFQGILKGEYDDLPEQAFYMVGSIDEVVEKAKKL.

152-159 (GGAGVGKT) is an ATP binding site.

This sequence belongs to the ATPase alpha/beta chains family. As to quaternary structure, F-type ATPases have 2 components, CF(1) - the catalytic core - and CF(0) - the membrane proton channel. CF(1) has five subunits: alpha(3), beta(3), gamma(1), delta(1), epsilon(1). CF(0) has three main subunits: a(1), b(2) and c(9-12). The alpha and beta chains form an alternating ring which encloses part of the gamma chain. CF(1) is attached to CF(0) by a central stalk formed by the gamma and epsilon chains, while a peripheral stalk is formed by the delta and b chains.

It is found in the cell inner membrane. The enzyme catalyses ATP + H2O + 4 H(+)(in) = ADP + phosphate + 5 H(+)(out). Produces ATP from ADP in the presence of a proton gradient across the membrane. The catalytic sites are hosted primarily by the beta subunits. This Aeromonas hydrophila subsp. hydrophila (strain ATCC 7966 / DSM 30187 / BCRC 13018 / CCUG 14551 / JCM 1027 / KCTC 2358 / NCIMB 9240 / NCTC 8049) protein is ATP synthase subunit beta.